A 154-amino-acid chain; its full sequence is Myoglobin (154 aa).

The Globin domain maps to Gly2 to Lys148. A Phosphoserine modification is found at Ser4. His65 contributes to the nitrite binding site. His65 serves as a coordination point for O2. Thr68 is subject to Phosphothreonine. His94 serves as a coordination point for heme b.

This sequence belongs to the globin family. In terms of assembly, monomeric.

It localises to the cytoplasm. Its subcellular location is the sarcoplasm. The catalysed reaction is Fe(III)-heme b-[protein] + nitric oxide + H2O = Fe(II)-heme b-[protein] + nitrite + 2 H(+). It catalyses the reaction H2O2 + AH2 = A + 2 H2O. Its function is as follows. Monomeric heme protein which primary function is to store oxygen and facilitate its diffusion within muscle tissues. Reversibly binds oxygen through a pentacoordinated heme iron and enables its timely and efficient release as needed during periods of heightened demand. Depending on the oxidative conditions of tissues and cells, and in addition to its ability to bind oxygen, it also has a nitrite reductase activity whereby it regulates the production of bioactive nitric oxide. Under stress conditions, like hypoxia and anoxia, it also protects cells against reactive oxygen species thanks to its pseudoperoxidase activity. The polypeptide is Myoglobin (MB) (Ochotona princeps (Southern American pika)).